The chain runs to 233 residues: C-type lectin domain-containing protein 87 (233 aa).

The signal sequence occupies residues 1-20 (MRFFRFLVFPVIAGLSSVLA). Asn-26 is a glycosylation site (N-linked (GlcNAc...) asparagine). The O-linked (Xyl...) (chondroitin sulfate) serine glycan is linked to Ser-32. Asn-81 is a glycosylation site (N-linked (GlcNAc...) asparagine). The C-type lectin domain maps to 93-223 (FADSCYWIET…CTYLLYSICE (131 aa)). Disulfide bonds link Cys-114-Cys-222 and Cys-193-Cys-214. N-linked (GlcNAc...) asparagine glycosylation occurs at Asn-225.

The polypeptide is C-type lectin domain-containing protein 87 (Caenorhabditis briggsae).